Here is a 540-residue protein sequence, read N- to C-terminus: Cytochrome P450 monooxygenase ORF5 (540 aa).

The chain crosses the membrane as a helical span at residues 48–68 (YHALGTAIALFACACAYALVA). N-linked (GlcNAc...) asparagine glycans are attached at residues Asn-376 and Asn-460. Residue Cys-483 participates in heme binding.

This sequence belongs to the cytochrome P450 family. Heme is required as a cofactor.

The protein localises to the membrane. Its pathway is sesquiterpene biosynthesis. Cytochrome P450 monooxygenase; part of the gene cluster that mediates the biosynthesis of PR-toxin, a bicyclic sesquiterpene belonging to the eremophilane class and acting as a mycotoxin. The first step of the pathway is catalyzed by the aristolochene synthase which performs the cyclization of trans,trans-farnesyl diphosphate (FPP) to the bicyclic sesquiterpene aristolochene. Following the formation of aristolochene, the non-oxygenated aristolochene is converted to the trioxygenated intermediate eremofortin B, via 7-epi-neopetasone. This conversion appears to involve three enzymes, a hydroxysterol oxidase-like enzyme, the quinone-oxidase prx3 that forms the quinone-type-structure in the bicyclic nucleus of aristolochene with the C8-oxo group and the C-3 hydroxyl group, and the P450 monooxygenase ORF6 that introduces the epoxide at the double bond between carbons 1 and 2. No monoxy or dioxy-intermediates have been reported to be released to the broth, so these three early oxidative reactions may be coupled together. Eremofortin B is further oxidized by another P450 monooxygenase, that introduces a second epoxide between carbons 7 and 11 prior to acetylation to eremofortin A by the acetyltransferase ORF8. The second epoxidation may be performed by a second P450 monooxygenase. After the acetylation step, eremofortin A is converted to eremofortin C and then to PR-toxin. First the conversion of eremofortin A to eremofortin C proceeds by oxidation of the side chain of the molecule at C-12 and is catalyzed by the short-chain oxidoreductase prx1. The cytochrome P450 monooxygenase ORF6 is probably also involved in this step. The primary alcohol formed at C-12 is finally oxidized by the short-chain alcohol dehydrogenase prx4 that forms PR-toxin. The chain is Cytochrome P450 monooxygenase ORF5 from Penicillium roqueforti (strain FM164).